Here is a 244-residue protein sequence, read N- to C-terminus: tRNA pseudouridine synthase A (244 aa).

Residue D52 is the Nucleophile of the active site. Y110 contacts substrate.

Belongs to the tRNA pseudouridine synthase TruA family. Homodimer.

The enzyme catalyses uridine(38/39/40) in tRNA = pseudouridine(38/39/40) in tRNA. In terms of biological role, formation of pseudouridine at positions 38, 39 and 40 in the anticodon stem and loop of transfer RNAs. The sequence is that of tRNA pseudouridine synthase A from Acetivibrio thermocellus (strain ATCC 27405 / DSM 1237 / JCM 9322 / NBRC 103400 / NCIMB 10682 / NRRL B-4536 / VPI 7372) (Clostridium thermocellum).